Consider the following 278-residue polypeptide: MTTRLDDTFARCRAEGRAALVTYVMAGDPDPETSFAVLRALPAAGADIVEFGLPFTDPMADGPAIQAAGLRALKAGQSVARTLDLVRRFRAEDPRTPVILMGYYNPIYTYGVPRFLADAVAAGVDGLIVVDLPPEEDDELCLPARQAGLAFIRLATPTTDERRLPAVLANTSGFVYYVSITGITGAATPDFGAVASAVARIRAQTALPVVVGFGVKTGEHAAAIARNADGVVVGSALVDTLARSLDLEGRATSGSVAAVLALVRDLAAGVRSAAGGAA.

Active-site proton acceptor residues include Glu50 and Asp61.

This sequence belongs to the TrpA family. Tetramer of two alpha and two beta chains.

The catalysed reaction is (1S,2R)-1-C-(indol-3-yl)glycerol 3-phosphate + L-serine = D-glyceraldehyde 3-phosphate + L-tryptophan + H2O. It participates in amino-acid biosynthesis; L-tryptophan biosynthesis; L-tryptophan from chorismate: step 5/5. In terms of biological role, the alpha subunit is responsible for the aldol cleavage of indoleglycerol phosphate to indole and glyceraldehyde 3-phosphate. This is Tryptophan synthase alpha chain from Methylobacterium nodulans (strain LMG 21967 / CNCM I-2342 / ORS 2060).